Consider the following 223-residue polypeptide: Large ribosomal subunit protein uL6c (223 aa).

Residues 1 to 41 constitute a chloroplast transit peptide; sequence MASSLVSSFQPRSAFLGDRNVFKVSSTPFAQVGYSSKTIEC.

This sequence belongs to the universal ribosomal protein uL6 family. In terms of assembly, part of the 50S ribosomal subunit.

It localises to the plastid. The protein resides in the chloroplast. Functionally, this protein binds directly to 23S ribosomal RNA and is located at the aminoacyl-tRNA binding site of the peptidyltransferase center. This Arabidopsis thaliana (Mouse-ear cress) protein is Large ribosomal subunit protein uL6c (RPL6).